A 466-amino-acid chain; its full sequence is Ribulose bisphosphate carboxylase large chain (466 aa).

An N6,N6,N6-trimethyllysine modification is found at Lys5. Asn114 and Thr164 together coordinate substrate. Residue Lys166 is the Proton acceptor of the active site. Lys168 contacts substrate. Residues Lys192, Asp194, and Glu195 each contribute to the Mg(2+) site. An N6-carboxylysine modification is found at Lys192. Residue His285 is the Proton acceptor of the active site. Substrate contacts are provided by Arg286, His318, and Ser370.

The protein belongs to the RuBisCO large chain family. Type I subfamily. Heterohexadecamer of 8 large chains and 8 small chains; disulfide-linked. The disulfide link is formed within the large subunit homodimers. Mg(2+) is required as a cofactor. Post-translationally, the disulfide bond which can form in the large chain dimeric partners within the hexadecamer appears to be associated with oxidative stress and protein turnover.

It localises to the plastid. The protein localises to the chloroplast. It carries out the reaction 2 (2R)-3-phosphoglycerate + 2 H(+) = D-ribulose 1,5-bisphosphate + CO2 + H2O. It catalyses the reaction D-ribulose 1,5-bisphosphate + O2 = 2-phosphoglycolate + (2R)-3-phosphoglycerate + 2 H(+). Its function is as follows. RuBisCO catalyzes two reactions: the carboxylation of D-ribulose 1,5-bisphosphate, the primary event in carbon dioxide fixation, as well as the oxidative fragmentation of the pentose substrate in the photorespiration process. Both reactions occur simultaneously and in competition at the same active site. The polypeptide is Ribulose bisphosphate carboxylase large chain (Drosera binata (Fork-leaved sundew)).